We begin with the raw amino-acid sequence, 114 residues long: UPF0342 protein lp_1415 (114 aa).

Belongs to the UPF0342 family.

This is UPF0342 protein lp_1415 from Lactiplantibacillus plantarum (strain ATCC BAA-793 / NCIMB 8826 / WCFS1) (Lactobacillus plantarum).